A 434-amino-acid polypeptide reads, in one-letter code: UDP-N-acetylmuramoylalanine--D-glutamate ligase (434 aa).

126–132 (GTSGKTT) is a binding site for ATP.

Belongs to the MurCDEF family.

It is found in the cytoplasm. It catalyses the reaction UDP-N-acetyl-alpha-D-muramoyl-L-alanine + D-glutamate + ATP = UDP-N-acetyl-alpha-D-muramoyl-L-alanyl-D-glutamate + ADP + phosphate + H(+). It participates in cell wall biogenesis; peptidoglycan biosynthesis. Cell wall formation. Catalyzes the addition of glutamate to the nucleotide precursor UDP-N-acetylmuramoyl-L-alanine (UMA). This is UDP-N-acetylmuramoylalanine--D-glutamate ligase from Desulfovibrio desulfuricans (strain ATCC 27774 / DSM 6949 / MB).